The chain runs to 81 residues: MRRSYVLLAFAIVLIISIISAQVEADASSDAFADAVADAVADPIKGKKIMKNMGKAMKIAGKVAKAMAPIVVPLIVSAAGK.

The signal sequence occupies residues 1 to 21 (MRRSYVLLAFAIVLIISIISA). Positions 22–43 (QVEADASSDAFADAVADAVADP) are excised as a propeptide. The residue at position 79 (Ala79) is an Alanine amide.

It belongs to the formicidae venom precursor-01 superfamily. Post-translationally, truncated sequences of this peptide have also been found in the venom. It is possible they have been cleaved in the venom. As to expression, expressed by the venom gland.

The protein resides in the secreted. Cationic amphipathic alpha-helical peptide with antimicrobial activities against E.coli (MIC=3.1), and S.aureus (MIC=3.1 uM). Also shows histamine-releasing activity (33.6% at 10 uM). Does not have activity against S.cerevisiae. Does not show hemolytic activity, even at 50 uM. The chain is U-poneritoxin(01)-Om6a from Odontomachus monticola (Trap-jaw ant).